An 88-amino-acid polypeptide reads, in one-letter code: DNA-directed RNA polymerase subunit omega (88 aa).

It belongs to the RNA polymerase subunit omega family. The RNAP catalytic core consists of 2 alpha, 1 beta, 1 beta' and 1 omega subunit. When a sigma factor is associated with the core the holoenzyme is formed, which can initiate transcription.

The enzyme catalyses RNA(n) + a ribonucleoside 5'-triphosphate = RNA(n+1) + diphosphate. Functionally, promotes RNA polymerase assembly. Latches the N- and C-terminal regions of the beta' subunit thereby facilitating its interaction with the beta and alpha subunits. The protein is DNA-directed RNA polymerase subunit omega of Haemophilus influenzae (strain 86-028NP).